Reading from the N-terminus, the 240-residue chain is 6-phosphogluconolactonase (240 aa).

This sequence belongs to the glucosamine/galactosamine-6-phosphate isomerase family. 6-phosphogluconolactonase subfamily.

It carries out the reaction 6-phospho-D-glucono-1,5-lactone + H2O = 6-phospho-D-gluconate + H(+). Its pathway is carbohydrate degradation; pentose phosphate pathway; D-ribulose 5-phosphate from D-glucose 6-phosphate (oxidative stage): step 2/3. In terms of biological role, hydrolysis of 6-phosphogluconolactone to 6-phosphogluconate. This Nostoc sp. (strain PCC 7120 / SAG 25.82 / UTEX 2576) protein is 6-phosphogluconolactonase (pgl).